A 211-amino-acid chain; its full sequence is Small ribosomal subunit protein uS3 (211 aa).

The KH type-2 domain maps to 16–85 (IDEYFKGKLV…NPQIEVKPLE (70 aa)).

Belongs to the universal ribosomal protein uS3 family. In terms of assembly, part of the 30S ribosomal subunit.

Functionally, binds the lower part of the 30S subunit head. This is Small ribosomal subunit protein uS3 from Methanococcus vannielii (strain ATCC 35089 / DSM 1224 / JCM 13029 / OCM 148 / SB).